The chain runs to 341 residues: Basic membrane protein D (341 aa).

Positions 1-16 (MLKKVYYFLIFLFIVA) are cleaved as a signal peptide. C17 is lipidated: N-palmitoyl cysteine. C17 is lipidated: S-diacylglycerol cysteine.

Belongs to the BMP lipoprotein family. In terms of assembly, monomer.

It is found in the cell inner membrane. Its function is as follows. Binds adenosine and inosine. May be part of an ABC-type nucleoside uptake system involved in the purine salvage pathway. The chain is Basic membrane protein D from Borreliella burgdorferi (strain JD1) (Borrelia burgdorferi).